Consider the following 314-residue polypeptide: FHA domain-containing protein DDL (314 aa).

Positions 1-10 (MAPSSRSPSP) are enriched in low complexity. Positions 1 to 146 (MAPSSRSPSP…NVEEDSVARM (146 aa)) are disordered. Residues 18–127 (ARGEKEIGRS…AIASRHDEGS (110 aa)) are compositionally biased toward basic and acidic residues. A Phosphoserine modification is found at S133. Residues 219-282 (YLFGRERRIA…NKTYINESPI (64 aa)) enclose the FHA domain.

Interacts with DCL1 (via N-terminus). As to expression, expressed in roots, lateral roots, vascular strands of roots and leaves, vegetative meristems, pollen and developing seeds.

It is found in the nucleus. In terms of biological role, involved in the microRNA (miRNA) and short interfering RNA (siRNA) biogenesis. May facilitate DCL1 to access or recognize primary miRNAs. Binds RNA non-specifically. The polypeptide is FHA domain-containing protein DDL (DDL) (Arabidopsis thaliana (Mouse-ear cress)).